A 141-amino-acid polypeptide reads, in one-letter code: Large ribosomal subunit protein uL11 (141 aa).

It belongs to the universal ribosomal protein uL11 family. Part of the ribosomal stalk of the 50S ribosomal subunit. Interacts with L10 and the large rRNA to form the base of the stalk. L10 forms an elongated spine to which L12 dimers bind in a sequential fashion forming a multimeric L10(L12)X complex. In terms of processing, one or more lysine residues are methylated.

In terms of biological role, forms part of the ribosomal stalk which helps the ribosome interact with GTP-bound translation factors. The chain is Large ribosomal subunit protein uL11 from Synechococcus sp. (strain WH7803).